Here is a 680-residue protein sequence, read N- to C-terminus: Lipase 1 (680 aa).

An N-terminal signal peptide occupies residues 1–34 (MKSQNKYSIRKFSVGASSILIATLLFLSGGQAQA). Residues 35–290 (AEKQVNMGNS…AKAKDDQTNK (256 aa)) constitute a propeptide that is removed on maturation. A disordered region spans residues 82 to 259 (KNLHNDKTIS…PTKDNDKKNG (178 aa)). Positions 84–111 (LHNDKTISEENHRKTDDLNKDQLKDDKN) are enriched in basic and acidic residues. Polar residues-rich tracts occupy residues 125–138 (KNNN…NQGL), 162–193 (SQDS…SQRE), and 204–223 (QPQQ…FNNE). Residues 224–234 (QEVKPQKDEKT) show a composition bias toward basic and acidic residues. Over residues 235-246 (LSVSDLKNNQKS) the composition is skewed to polar residues. The Nucleophile role is filled by Ser-408. Catalysis depends on Asp-600, which acts as the Charge relay system. Asp-638 provides a ligand contact to Ca(2+). His-639 (charge relay system) is an active-site residue. Asp-641, Asp-646, and Asp-649 together coordinate Ca(2+).

This sequence belongs to the AB hydrolase superfamily. Lipase family.

It localises to the secreted. It catalyses the reaction a triacylglycerol + H2O = a diacylglycerol + a fatty acid + H(+). In Staphylococcus aureus (strain Mu50 / ATCC 700699), this protein is Lipase 1 (lip1).